The primary structure comprises 430 residues: Adenylosuccinate synthetase (430 aa).

GTP-binding positions include 12–18 and 40–42; these read GDEGKGK and GHT. Catalysis depends on aspartate 13, which acts as the Proton acceptor. Positions 13 and 40 each coordinate Mg(2+). IMP contacts are provided by residues 13–16, 38–41, threonine 130, arginine 144, glutamine 224, threonine 239, and arginine 303; these read DEGK and NAGH. The Proton donor role is filled by histidine 41. Substrate is bound at residue 299–305; it reads VNTGRKR. GTP is bound by residues arginine 305, 331–333, and 413–415; these read KLD and STS.

This sequence belongs to the adenylosuccinate synthetase family. Homodimer. The cofactor is Mg(2+).

It localises to the cytoplasm. The catalysed reaction is IMP + L-aspartate + GTP = N(6)-(1,2-dicarboxyethyl)-AMP + GDP + phosphate + 2 H(+). The protein operates within purine metabolism; AMP biosynthesis via de novo pathway; AMP from IMP: step 1/2. In terms of biological role, plays an important role in the de novo pathway of purine nucleotide biosynthesis. Catalyzes the first committed step in the biosynthesis of AMP from IMP. The chain is Adenylosuccinate synthetase from Rhodopseudomonas palustris (strain BisA53).